The sequence spans 647 residues: Threonine--tRNA ligase (647 aa).

The region spanning 1–61 (MINITFPDGA…TEDGSIEIVT (61 aa)) is the TGS domain. Positions 242–540 (DHRKLGKELD…LIENYKGAFP (299 aa)) are catalytic. Zn(2+) contacts are provided by Cys-336, His-387, and His-517.

The protein belongs to the class-II aminoacyl-tRNA synthetase family. Homodimer. The cofactor is Zn(2+).

It is found in the cytoplasm. It carries out the reaction tRNA(Thr) + L-threonine + ATP = L-threonyl-tRNA(Thr) + AMP + diphosphate + H(+). Functionally, catalyzes the attachment of threonine to tRNA(Thr) in a two-step reaction: L-threonine is first activated by ATP to form Thr-AMP and then transferred to the acceptor end of tRNA(Thr). Also edits incorrectly charged L-seryl-tRNA(Thr). This chain is Threonine--tRNA ligase, found in Streptococcus pneumoniae serotype 2 (strain D39 / NCTC 7466).